We begin with the raw amino-acid sequence, 271 residues long: Formamidopyrimidine-DNA glycosylase (271 aa).

Proline 2 functions as the Schiff-base intermediate with DNA in the catalytic mechanism. Residue glutamate 3 is the Proton donor of the active site. The active-site Proton donor; for beta-elimination activity is lysine 58. Residues histidine 91, arginine 110, and arginine 152 each contribute to the DNA site. The segment at 237-271 (WVYGRTGQPCRKCGALVSKTRQGQRSSFFCAQCQK) adopts an FPG-type zinc-finger fold. Catalysis depends on arginine 261, which acts as the Proton donor; for delta-elimination activity.

Belongs to the FPG family. In terms of assembly, monomer. It depends on Zn(2+) as a cofactor.

It carries out the reaction Hydrolysis of DNA containing ring-opened 7-methylguanine residues, releasing 2,6-diamino-4-hydroxy-5-(N-methyl)formamidopyrimidine.. The catalysed reaction is 2'-deoxyribonucleotide-(2'-deoxyribose 5'-phosphate)-2'-deoxyribonucleotide-DNA = a 3'-end 2'-deoxyribonucleotide-(2,3-dehydro-2,3-deoxyribose 5'-phosphate)-DNA + a 5'-end 5'-phospho-2'-deoxyribonucleoside-DNA + H(+). Involved in base excision repair of DNA damaged by oxidation or by mutagenic agents. Acts as a DNA glycosylase that recognizes and removes damaged bases. Has a preference for oxidized purines, such as 7,8-dihydro-8-oxoguanine (8-oxoG). Has AP (apurinic/apyrimidinic) lyase activity and introduces nicks in the DNA strand. Cleaves the DNA backbone by beta-delta elimination to generate a single-strand break at the site of the removed base with both 3'- and 5'-phosphates. The polypeptide is Formamidopyrimidine-DNA glycosylase (Nitrosomonas eutropha (strain DSM 101675 / C91 / Nm57)).